A 536-amino-acid polypeptide reads, in one-letter code: Multicopper oxidase CueO (536 aa).

The segment at residues 1-28 is a signal peptide (tat-type signal); sequence MLRRDFLKYSVALGVASALPLWSRAAFA. 3 consecutive Plastocyanin-like domains span residues 53 to 165, 229 to 295, and 424 to 536; these read KAGQ…IEDD, GWLR…AFDL, and FHNA…GFTV. Cu cation-binding residues include His101, His103, His141, and His143. 7 residues coordinate Cu cation: His463, His466, His468, His519, Cys520, His521, and His525.

This sequence belongs to the multicopper oxidase family. In terms of assembly, monomer. The cofactor is Cu cation. In terms of processing, predicted to be exported by the Tat system. The position of the signal peptide cleavage has not been experimentally proven.

The protein localises to the periplasm. It catalyses the reaction 4 Cu(+) + O2 + 4 H(+) = 4 Cu(2+) + 2 H2O. Its function is as follows. Multicopper oxidase involved in copper homeostasis and copper tolerance under both aerobic and anaerobic conditions. Is responsible for the oxidation of Cu(+) to the less harmful Cu(2+) in the periplasm, thereby preventing Cu(+) from entering the cytoplasm. In Salmonella typhimurium (strain LT2 / SGSC1412 / ATCC 700720), this protein is Multicopper oxidase CueO (cueO).